Reading from the N-terminus, the 277-residue chain is Putative phosphoenolpyruvate synthase regulatory protein (277 aa).

157–164 provides a ligand contact to ADP; sequence GVSRSGKT.

Belongs to the pyruvate, phosphate/water dikinase regulatory protein family. PSRP subfamily.

It catalyses the reaction [pyruvate, water dikinase] + ADP = [pyruvate, water dikinase]-phosphate + AMP + H(+). It carries out the reaction [pyruvate, water dikinase]-phosphate + phosphate + H(+) = [pyruvate, water dikinase] + diphosphate. Bifunctional serine/threonine kinase and phosphorylase involved in the regulation of the phosphoenolpyruvate synthase (PEPS) by catalyzing its phosphorylation/dephosphorylation. The protein is Putative phosphoenolpyruvate synthase regulatory protein of Vibrio cholerae serotype O1 (strain ATCC 39541 / Classical Ogawa 395 / O395).